A 296-amino-acid polypeptide reads, in one-letter code: ADP-forming sulfoacetate-CoA ligase subunit SqwL (296 aa).

CoA contacts are provided by residues 17–20 (TGSE), lysine 43, and 96–98 (IAD). Catalysis depends on histidine 251, which acts as the Tele-phosphohistidine intermediate.

This sequence belongs to the succinate/malate CoA ligase alpha subunit family. As to quaternary structure, forms a complex with SqwK.

It carries out the reaction sulfoacetate + ATP + CoA = sulfoacetyl-CoA + ADP + phosphate. Functionally, part of a variant of the sulfo-TK pathway, a D-sulfoquinovose degradation pathway that produces sulfoacetate. Hydrolyzes sulfoacetyl-coenzyme A (sulfoacetyl-CoA) to produce sulfoacetate and CoA coupled with the phosphorylation of ADP to generate ATP. Cannot use succinate, acetate or 3-hydroxypropionate, and shows only residual activities with malonate and 3-sulfopropanoate. This Acholeplasma sp protein is ADP-forming sulfoacetate-CoA ligase subunit SqwL.